The following is a 201-amino-acid chain: Recombination protein RecR (201 aa).

The C4-type zinc-finger motif lies at 57–72 (CADCRTFTEQEICTIC). Positions 81-176 (GLICVVESPA…DASRIAHGVP (96 aa)) constitute a Toprim domain.

It belongs to the RecR family.

Functionally, may play a role in DNA repair. It seems to be involved in an RecBC-independent recombinational process of DNA repair. It may act with RecF and RecO. This Erwinia tasmaniensis (strain DSM 17950 / CFBP 7177 / CIP 109463 / NCPPB 4357 / Et1/99) protein is Recombination protein RecR.